A 355-amino-acid polypeptide reads, in one-letter code: Protein-glutamate methylesterase/protein-glutamine glutaminase (355 aa).

The Response regulatory domain occupies 4 to 121; it reads KVLIIDDSAL…ANGMHEYSEM (118 aa). At Asp55 the chain carries 4-aspartylphosphate. The 193-residue stretch at 156–348 folds into the CheB-type methylesterase domain; that stretch reads LISSEKLIII…GRVLQYLAAN (193 aa). Residues Ser168, His194, and Asp290 contribute to the active site.

It belongs to the CheB family. Phosphorylated by CheA. Phosphorylation of the N-terminal regulatory domain activates the methylesterase activity.

It is found in the cytoplasm. The enzyme catalyses [protein]-L-glutamate 5-O-methyl ester + H2O = L-glutamyl-[protein] + methanol + H(+). It catalyses the reaction L-glutaminyl-[protein] + H2O = L-glutamyl-[protein] + NH4(+). In terms of biological role, involved in chemotaxis. Part of a chemotaxis signal transduction system that modulates chemotaxis in response to various stimuli. Catalyzes the demethylation of specific methylglutamate residues introduced into the chemoreceptors (methyl-accepting chemotaxis proteins or MCP) by CheR. Also mediates the irreversible deamidation of specific glutamine residues to glutamic acid. This chain is Protein-glutamate methylesterase/protein-glutamine glutaminase, found in Methylobacillus flagellatus (strain ATCC 51484 / DSM 6875 / VKM B-1610 / KT).